Consider the following 425-residue polypeptide: Histone-binding protein RBBP7 (425 aa).

A2 is subject to N-acetylalanine. Residue S3 is modified to Phosphoserine. K4 carries the post-translational modification N6-acetyllysine; alternate. A Glycyl lysine isopeptide (Lys-Gly) (interchain with G-Cter in SUMO2); alternate cross-link involves residue K4. Residue K4 forms a Glycyl lysine isopeptide (Lys-Gly) (interchain with G-Cter in ubiquitin); alternate linkage. T10 carries the phosphothreonine modification. WD repeat units follow at residues 47–122 (QWLP…KINH), 128–173 (RARY…LRLR), 181–217 (GLSWNSNLSGHLLSASDDHTVCLWDINAGPKEGKIVD), 228–269 (VVED…HLVD), 275–312 (VNCLSFNPYSEFILATGSADKTVALWDLRNLKLKLHTF), 318–369 (EIFQ…LFIH), and 376–403 (ISDFSWNPNEPWVICSVSEDNIMQIWQM). S95 carries the phosphoserine modification. Residue K101 forms a Glycyl lysine isopeptide (Lys-Gly) (interchain with G-Cter in SUMO2) linkage. K119 is modified (N6-acetyllysine). K155 participates in a covalent cross-link: Glycyl lysine isopeptide (Lys-Gly) (interchain with G-Cter in SUMO2). K159 carries the N6-acetyllysine; alternate modification. Residue K159 forms a Glycyl lysine isopeptide (Lys-Gly) (interchain with G-Cter in SUMO2); alternate linkage. The residue at position 354 (S354) is a Phosphoserine.

The protein belongs to the WD repeat RBAP46/RBAP48/MSI1 family. In terms of assembly, binds directly to helix 1 of the histone fold of histone H4, a region that is not accessible when H4 is in chromatin. Subunit of the type B histone acetyltransferase (HAT) complex, composed of RBBP7 and HAT1. Subunit of the core histone deacetylase (HDAC) complex, which is composed of HDAC1, HDAC2, RBBP4 and RBBP7. The core HDAC complex associates with SIN3A, ARID4B/SAP180, SAP18, SAP30, SAP130, SUDS3/SAP45 and possibly ARID4A/RBP1 and ING1 to form the SIN3 HDAC complex. Component of the nucleosome remodeling and deacetylase (NuRD) repressor complex, composed of core proteins MTA1, MTA2, MTA3, RBBP4, RBBP7, HDAC1, HDAC2, MBD2, MBD3, and peripherally associated proteins CDK2AP1, CDK2AP2, GATAD2A, GATAD2B, CHD3, CHD4 and CHD5. The exact stoichiometry of the NuRD complex is unknown, and some subunits such as MBD2 and MBD3, GATAD2A and GATAD2B, and CHD3, CHD4 and CHD5 define mutually exclusive NuRD complexes. The NuRD complex may interact with MBD3L1. The NuRD complex may interact with MBD3L2. Subunit of the PRC2/EED-EZH2 complex, which is composed of at least EED, EZH2, RBBP4, RBBP7 and SUZ12. The PRC2/EED-EZH2 complex may also associate with HDAC1. Component of the NURF-1 ISWI chromatin remodeling complex (also called the nucleosome-remodeling factor (NURF) complex) at least composed of SMARCA1, BPTF, RBBP4 and RBBP7. Within the complex interacts with SMARCA1. Component of the BPFT-SMARCA1 complex at least composed of SMARCA1, BPFT, RBBP4 and RBBP7; the complex is catalytically inactive and does not remodel chromatin. Within the complex interacts with SMARCA1. Interacts with BRCA1. Interacts with CDK2AP1. Interacts with CENPA. Interacts with CHD3. Interacts with CHD4. Interacts with CREBBP, and this interaction may be enhanced by the binding of phosphorylated CREB1 to CREBBP. Interacts with HDAC7. Interacts with MTA1. Interacts with PWWP2B. Interacts with RB1 (via viral protein-binding domain). Interacts with SUV39H1. As to expression, higher levels in brain, thymus, lung, spleen, kidney, testis, and ovary/uterus; lower levels in heart, liver, and muscle.

The protein localises to the nucleus. Functionally, core histone-binding subunit that may target chromatin remodeling factors, histone acetyltransferases and histone deacetylases to their histone substrates in a manner that is regulated by nucleosomal DNA. Component of several complexes which regulate chromatin metabolism. These include the type B histone acetyltransferase (HAT) complex, which is required for chromatin assembly following DNA replication; the core histone deacetylase (HDAC) complex, which promotes histone deacetylation and consequent transcriptional repression; the nucleosome remodeling and histone deacetylase complex (the NuRD complex), which promotes transcriptional repression by histone deacetylation and nucleosome remodeling; and the PRC2/EED-EZH2 complex, which promotes repression of homeotic genes during development; and the NURF (nucleosome remodeling factor) complex. In Mus musculus (Mouse), this protein is Histone-binding protein RBBP7 (Rbbp7).